The primary structure comprises 590 residues: MNKLIKEKLSVLPDQPGCYLMKDRQNTVIYVGKAKILKNRVRSYFTGSHDAKTQRLVSEIEDFEYIVTSSNIEALILELNLIKKYDPKYNVMLKDDKTYPFIKITNERHPKLIVTRHVKKDKGKYFGPYPNVQAARETKKLLDRLYPLRKCATLPDRVCLYYHLGQCLAPCVYDISEETNKQLVDEIIRFLNGGHQQIKKELTEKMQEAAEQLEFERAKELRDQIAYIDSTMEKQKMTMSDLSDRDVFAYAYDKGWMCVQVFFIRQGKLIERDVSLFPMYQDPEEEFLTFMGQFYSKNNHFLPKEILVPDSVDQEMIEQLLETNVHQPKKGKKKDLLLLAHQNAKIALKEKFSLIERDEERSIGAVKQLGDALNIYMPYRIEAFDNSNIQGADPVSAMVVFQDGKPYKKEYRKYKIKTVTGPDDYASMREVIRRRYTRVLKDELPLPDLILIDGGKGQINAAIDVLENELNLSVPVAGLVKDEKHRTSNLMMGDTLEIVALERNSQAFYLLQRIQDEVHRFAISFHRQLRGKNAFQSILDDVPGIGEKRKKQLLKHFGSVKKMKEATIEDFQEAGIPKQTAELLIEALKK.

In terms of domain architecture, GIY-YIG spans aspartate 14–valine 91. A UVR domain is found at glutamine 196–threonine 231.

Belongs to the UvrC family. Interacts with UvrB in an incision complex.

It is found in the cytoplasm. The UvrABC repair system catalyzes the recognition and processing of DNA lesions. UvrC both incises the 5' and 3' sides of the lesion. The N-terminal half is responsible for the 3' incision and the C-terminal half is responsible for the 5' incision. In Bacillus pumilus (strain SAFR-032), this protein is UvrABC system protein C.